Reading from the N-terminus, the 72-residue chain is SRY-related protein MG43 (72 aa).

Positions 1-69 (VKRPMNAFMV…KHMADYPDYK (69 aa)) form a DNA-binding region, HMG box.

It is found in the nucleus. This is SRY-related protein MG43 from Tarentola mauritanica (Common wall gecko).